The primary structure comprises 300 residues: UDP-N-acetylenolpyruvoylglucosamine reductase (300 aa).

Residues 28-190 (KIGGRVKYLV…TRAMMSFKKE (163 aa)) enclose the FAD-binding PCMH-type domain. Arginine 169 is an active-site residue. Serine 219 acts as the Proton donor in catalysis. The active site involves glutamate 290.

This sequence belongs to the MurB family. The cofactor is FAD.

The protein localises to the cytoplasm. The catalysed reaction is UDP-N-acetyl-alpha-D-muramate + NADP(+) = UDP-N-acetyl-3-O-(1-carboxyvinyl)-alpha-D-glucosamine + NADPH + H(+). It participates in cell wall biogenesis; peptidoglycan biosynthesis. Functionally, cell wall formation. The chain is UDP-N-acetylenolpyruvoylglucosamine reductase from Thermotoga sp. (strain RQ2).